The sequence spans 170 residues: Cathelicidin antimicrobial peptide (170 aa).

The N-terminal stretch at 1-30 is a signal peptide; the sequence is MKTQRDGPSLGRWSLVLLLLGLTMPLAITA. A propeptide spans 31–131 (cathelin-like domain (CLD)); it reads QVLSYQEAVL…DISCDKDERK (101 aa). 2 disulfides stabilise this stretch: Cys86/Cys97 and Cys108/Cys125. An active core region spans residues 150 to 162; it reads FKKIGQKINDFLG.

Belongs to the cathelicidin family. Monomer, homodimer or homotrimer (in vitro). Oligomerizes as tetra- or hexamer in solution (in vitro). In terms of processing, proteolytically cleaved by proteinase PRTN3 into antibacterial peptide LL-37. Proteolytically cleaved by cathepsin CTSG and neutrophil elastase ELANE. Post-translationally, resistant to proteolytic degradation in solution, and when bound to both zwitterionic (mimicking mammalian membranes) and negatively charged membranes (mimicking bacterial membranes). After secretion onto the skin surface, the CAMP gene product is processed by a serine protease-dependent mechanism into multiple novel antimicrobial peptides distinct from and shorter than cathelicidin LL-37. These peptides show enhanced antimicrobial action, acquiring the ability to kill skin pathogens such as S.aureus, E.coli and C.albicans. These peptides have lost the ability to stimulate CXCL8/IL8 release from keratinocytes. The peptides act synergistically, killing bacteria at lower concentrations when present together, and maintain activity at increased salt condition.

The protein localises to the secreted. It is found in the vesicle. Antimicrobial protein that is an integral component of the innate immune system. Binds to bacterial lipopolysaccharides (LPS). Acts via neutrophil N-formyl peptide receptors to enhance the release of CXCL2. Postsecretory processing generates multiple cathelicidin antimicrobial peptides with various lengths which act as a topical antimicrobial defense in sweat on skin. The unprocessed precursor form, cathelicidin antimicrobial peptide, inhibits the growth of Gram-negative E.coli and E.aerogenes with efficiencies comparable to that of the mature peptide LL-37 (in vitro). Its function is as follows. Antimicrobial peptide that is an integral component of the innate immune system. Binds to bacterial lipopolysaccharides (LPS). Causes membrane permeabilization by forming transmembrane pores (in vitro). Causes lysis of E.coli. Exhibits antimicrobial activity against Gram-negative bacteria such as P.aeruginosa, S.typhimurium, E.aerogenes, E.coli and P.syringae, Gram-positive bacteria such as L.monocytogenes, S.epidermidis, S.pyogenes and S.aureus, as well as vancomycin-resistant enterococci (in vitro). Exhibits antimicrobial activity against methicillin-resistant S.aureus, P.mirabilis, and C.albicans in low-salt media, but not in media containing 100 mM NaCl (in vitro). Forms chiral supramolecular assemblies with quinolone signal (PQS) molecules of P.aeruginosa, which may lead to interference of bacterial quorum signaling and perturbance of bacterial biofilm formation. May form supramolecular fiber-like assemblies on bacterial membranes. Induces cytokine and chemokine producation as well as TNF/TNFA and CSF2/GMCSF production in normal human keratinocytes. Exhibits hemolytic activity against red blood cells. Functionally, exhibits antimicrobial activity against E.coli and B.megaterium (in vitro). This is Cathelicidin antimicrobial peptide from Cebus capucinus (White-faced sapajou).